The following is a 429-amino-acid chain: Probable M18 family aminopeptidase 2 (429 aa).

Residues His-82, His-156, and His-401 each coordinate Zn(2+).

The protein belongs to the peptidase M18 family. Zn(2+) is required as a cofactor.

The sequence is that of Probable M18 family aminopeptidase 2 from Pseudomonas fluorescens (strain SBW25).